Reading from the N-terminus, the 322-residue chain is Eukaryotic translation initiation factor 3 subunit I (322 aa).

WD repeat units follow at residues glycine 4 to threonine 43, glycine 46 to serine 85, methionine 141 to aspartate 180, aspartate 184 to threonine 223, and glycine 281 to glutamate 322.

It belongs to the eIF-3 subunit I family. Component of the eukaryotic translation initiation factor 3 (eIF-3) complex. The eIF-3 complex interacts with pix.

The protein resides in the cytoplasm. In terms of biological role, component of the eukaryotic translation initiation factor 3 (eIF-3) complex, which is involved in protein synthesis of a specialized repertoire of mRNAs and, together with other initiation factors, stimulates binding of mRNA and methionyl-tRNAi to the 40S ribosome. The eIF-3 complex specifically targets and initiates translation of a subset of mRNAs involved in cell proliferation. This Drosophila ananassae (Fruit fly) protein is Eukaryotic translation initiation factor 3 subunit I.